We begin with the raw amino-acid sequence, 430 residues long: GTPase Obg (430 aa).

An Obg domain is found at 1–158 (MFIDKAKIYL…LTVVLELKLI (158 aa)). An OBG-type G domain is found at 159-330 (ADVGLVGFPN…LLSYVSKRLK (172 aa)). GTP contacts are provided by residues 165 to 172 (GFPNVGKS), 190 to 194 (FTTLT), 212 to 215 (DIPG), 282 to 285 (NKTD), and 311 to 313 (SAA). 2 residues coordinate Mg(2+): S172 and T192. The 80-residue stretch at 351–430 (KYEETEDKYH…MYSVEFEYFN (80 aa)) folds into the OCT domain.

This sequence belongs to the TRAFAC class OBG-HflX-like GTPase superfamily. OBG GTPase family. Monomer. Requires Mg(2+) as cofactor.

Its subcellular location is the cytoplasm. Functionally, an essential GTPase which binds GTP, GDP and possibly (p)ppGpp with moderate affinity, with high nucleotide exchange rates and a fairly low GTP hydrolysis rate. Plays a role in control of the cell cycle, stress response, ribosome biogenesis and in those bacteria that undergo differentiation, in morphogenesis control. This chain is GTPase Obg, found in Alkaliphilus oremlandii (strain OhILAs) (Clostridium oremlandii (strain OhILAs)).